The following is a 593-amino-acid chain: Metal-response element-binding transcription factor 2 (593 aa).

Residues 1 to 35 form a disordered region; that stretch reads MRDSTGAGNSLVHKRSPLRRNQKTPTSLTKLSLQD. Over residues 12-22 the composition is skewed to basic residues; it reads VHKRSPLRRNQ. The segment covering 23–32 has biased composition (polar residues); sequence KTPTSLTKLS. Thr24 carries the phosphothreonine modification. The 58-residue stretch at 44–101 folds into the Tudor domain; that stretch reads CKFEEGQDVLARWSDGLFYLGTIKKINILKQSCFIIFEDSSKSWVLWKDIQTGATGSG. 2 consecutive PHD-type zinc fingers follow at residues 102-157 and 201-255; these read EMVC…CVFA and QCYC…CSSG. Lys360 is covalently cross-linked (Glycyl lysine isopeptide (Lys-Gly) (interchain with G-Cter in SUMO2)). Basic and acidic residues predominate over residues 360–374; it reads KAEKEPEGTSHEFKI. Disordered regions lie at residues 360–411 and 424–486; these read KAEK…PYTR and KESI…TRTG. Residues 445 to 454 are compositionally biased toward polar residues; sequence TAHSSNTSDV. Ser452 carries the post-translational modification Phosphoserine. Residues 459–471 are compositionally biased toward low complexity; that stretch reads ASSAKETTSSSIS. Lys522 participates in a covalent cross-link: Glycyl lysine isopeptide (Lys-Gly) (interchain with G-Cter in SUMO2).

This sequence belongs to the Polycomblike family. In terms of assembly, associates with the PRC2 complex, which consists of the core components EED, EZH1 or EZH2, SUZ12, and RBBP4, and various combinations of accessory subunits including AEBP2, JARID2, PHF19, MTF2 and EPOP. Forms a dimeric PRC2.1 (class 1, PRC-PCL) complex consisting of at least SUZ12, RBBP4, and PHF19 or MTF2; PHF19 and MTF2 stabilize the dimeric structure which enhances PRC2 interaction with chromatin.

It localises to the nucleus. Its function is as follows. Polycomb group (PcG) protein that specifically binds histone H3 trimethylated at 'Lys-36' (H3K36me3) and recruits the PRC2 complex, thus enhancing PRC2 H3K27me3 methylation activity. Regulates the transcriptional networks during embryonic stem cell self-renewal and differentiation. Promotes recruitment of the PRC2 complex to the inactive X chromosome in differentiating XX ES cells and PRC2 recruitment to target genes in undifferentiated ES cells. Required to repress Hox genes by enhancing H3K27me3 methylation of the PRC2 complex. In some conditions may act as an inhibitor of PRC2 activity: able to activate the CDKN2A gene and promote cellular senescence by suppressing the catalytic activity of the PRC2 complex locally. Binds to the metal-regulating-element (MRE) of MT1A gene promoter. This Homo sapiens (Human) protein is Metal-response element-binding transcription factor 2 (MTF2).